We begin with the raw amino-acid sequence, 291 residues long: MLVAALLCALCCGLLAASARAGYSEDRCSWRGSGLTQEPGSVGQLTLDCTEGAIEWLYPAGALRLTLGGSDPGTRPSIVCLRPTRPFAGAQVFAERMAGNLELLLAEGQGLAGGRCMRWGPRERRALFLQATPHRDISRRVAAFQFELHEDQRAEMSPQAQGFGVDGACRPCSDAELLLTACTSDFVIHGTIHGVVHDMELQESVITVVATRVIRQTLPLFQEGSSEGRGQASVRTLLRCGVRPGPGSFLFMGWSRFGEAWLGCAPRFQEFSRVYSAALAAHLNPCEVALD.

An N-terminal signal peptide occupies residues 1–21 (MLVAALLCALCCGLLAASARA). Cystine bridges form between C28–C49, C80–C116, C169–C240, C172–C264, and C182–C286.

It belongs to the meteorin family. As to quaternary structure, monomer.

The protein localises to the secreted. Functionally, involved in both glial cell differentiation and axonal network formation during neurogenesis. Promotes astrocyte differentiation and transforms cerebellar astrocytes into radial glia. Also induces axonal extension in small and intermediate neurons of sensory ganglia by activating nearby satellite glia. In Rattus norvegicus (Rat), this protein is Meteorin (Metrn).